Reading from the N-terminus, the 248-residue chain is Probable transcriptional regulatory protein Mrad2831_3553 (248 aa).

The protein belongs to the TACO1 family.

It is found in the cytoplasm. The polypeptide is Probable transcriptional regulatory protein Mrad2831_3553 (Methylobacterium radiotolerans (strain ATCC 27329 / DSM 1819 / JCM 2831 / NBRC 15690 / NCIMB 10815 / 0-1)).